We begin with the raw amino-acid sequence, 101 residues long: Small ribosomal subunit protein uS14 (101 aa).

Belongs to the universal ribosomal protein uS14 family. As to quaternary structure, part of the 30S ribosomal subunit. Contacts proteins S3 and S10.

In terms of biological role, binds 16S rRNA, required for the assembly of 30S particles and may also be responsible for determining the conformation of the 16S rRNA at the A site. The polypeptide is Small ribosomal subunit protein uS14 (Photobacterium profundum (strain SS9)).